The chain runs to 156 residues: Small ribosomal subunit protein uS7c (156 aa).

This sequence belongs to the universal ribosomal protein uS7 family. Part of the 30S ribosomal subunit.

It localises to the plastid. The protein resides in the chloroplast. In terms of biological role, one of the primary rRNA binding proteins, it binds directly to 16S rRNA where it nucleates assembly of the head domain of the 30S subunit. This chain is Small ribosomal subunit protein uS7c (rps7), found in Chara vulgaris (Common stonewort).